A 1343-amino-acid chain; its full sequence is DNA-directed RNA polymerase subunit beta (1343 aa).

It belongs to the RNA polymerase beta chain family. In terms of assembly, the RNAP catalytic core consists of 2 alpha, 1 beta, 1 beta' and 1 omega subunit. When a sigma factor is associated with the core the holoenzyme is formed, which can initiate transcription.

The enzyme catalyses RNA(n) + a ribonucleoside 5'-triphosphate = RNA(n+1) + diphosphate. Functionally, DNA-dependent RNA polymerase catalyzes the transcription of DNA into RNA using the four ribonucleoside triphosphates as substrates. In Shewanella sediminis (strain HAW-EB3), this protein is DNA-directed RNA polymerase subunit beta.